Reading from the N-terminus, the 963-residue chain is Protein suppressor of white apricot (963 aa).

The stretch at 234–276 is one SURP motif 1 repeat; the sequence is IIEKTARFIATQGAQMEILIKAKQANNTQFDFLTQGGHLQPYY. 2 disordered regions span residues 290–322 and 360–430; these read PAPQTPLDQQNTDKEAPSADDHSEEVAGGRRNP and EDES…EPPQ. Residues 300 to 317 are compositionally biased toward basic and acidic residues; the sequence is NTDKEAPSADDHSEEVAG. Positions 364 to 375 are enriched in polar residues; the sequence is SNPGNSQHSGGT. Basic and acidic residues predominate over residues 407–418; the sequence is THEEESSNREQQ. S438, S447, S448, and S450 each carry phosphoserine. A disordered region spans residues 445 to 470; it reads NYSSESEEEEDQVQPEKEEEKKPEPV. Basic and acidic residues predominate over residues 458–468; sequence QPEKEEEKKPE. An SURP motif 2 repeat occupies 483 to 523; the sequence is IIDKTATYVIKNGRQFEETLRTKSVDRFSFLLPANEYYPYY. 3 disordered regions span residues 593-613, 634-662, and 716-963; these read PQEASDEETSSNAAGVEHVRP, TAGQKGNITASPSCSSPQKEQRQAEERVK, and PPES…SSSP. Residues 637-651 are compositionally biased toward polar residues; the sequence is QKGNITASPSCSSPQ. S649 carries the post-translational modification Phosphoserine. Residues 652-662 show a composition bias toward basic and acidic residues; the sequence is KEQRQAEERVK. The segment covering 718 to 727 has biased composition (low complexity); that stretch reads ESAAGAATAD. Residues 768–778 show a composition bias toward acidic residues; the sequence is DEEDDDEEDGG. Positions 787-796 are enriched in polar residues; that stretch reads NDDSTNTFTS. Pro residues predominate over residues 799–809; it reads VLPPTAAPPPA. The segment covering 820 to 830 has biased composition (low complexity); the sequence is QLVATTSTRSS. The segment covering 831–847 has biased composition (basic residues); that stretch reads SSRHLKTHRRSRSRSKN. A compositionally biased stretch (low complexity) spans 848–858; it reads VRSSDSSPSSR. Basic residues-rich tracts occupy residues 861–870 and 882–913; these read SRRRRQKSSR and KSQHSSTQRKKTPKKRRRSKSRSRSKSIRRSR. S912, S914, and S916 each carry phosphoserine. Over residues 934–944 the composition is skewed to basic and acidic residues; sequence AEQRRQQDRRR. Over residues 945-963 the composition is skewed to basic residues; the sequence is TPTKKSHKRHKRRRRSSSP.

It is found in the nucleus speckle. Its function is as follows. Regulator of pre-mRNA splicing (and, possibly, of other RNA processing events). Regulates its own expression at the level of RNA processing. The chain is Protein suppressor of white apricot (su(w[a])) from Drosophila melanogaster (Fruit fly).